A 371-amino-acid polypeptide reads, in one-letter code: UDP-N-acetylglucosamine--N-acetylmuramyl-(pentapeptide) pyrophosphoryl-undecaprenol N-acetylglucosamine transferase (371 aa).

UDP-N-acetyl-alpha-D-glucosamine is bound by residues T15–G17, N126, R172, S199, I256, A275–E280, and Q301.

Belongs to the glycosyltransferase 28 family. MurG subfamily.

It localises to the cell inner membrane. The catalysed reaction is di-trans,octa-cis-undecaprenyl diphospho-N-acetyl-alpha-D-muramoyl-L-alanyl-D-glutamyl-meso-2,6-diaminopimeloyl-D-alanyl-D-alanine + UDP-N-acetyl-alpha-D-glucosamine = di-trans,octa-cis-undecaprenyl diphospho-[N-acetyl-alpha-D-glucosaminyl-(1-&gt;4)]-N-acetyl-alpha-D-muramoyl-L-alanyl-D-glutamyl-meso-2,6-diaminopimeloyl-D-alanyl-D-alanine + UDP + H(+). Its pathway is cell wall biogenesis; peptidoglycan biosynthesis. Cell wall formation. Catalyzes the transfer of a GlcNAc subunit on undecaprenyl-pyrophosphoryl-MurNAc-pentapeptide (lipid intermediate I) to form undecaprenyl-pyrophosphoryl-MurNAc-(pentapeptide)GlcNAc (lipid intermediate II). This is UDP-N-acetylglucosamine--N-acetylmuramyl-(pentapeptide) pyrophosphoryl-undecaprenol N-acetylglucosamine transferase from Francisella philomiragia subsp. philomiragia (strain ATCC 25017 / CCUG 19701 / FSC 153 / O#319-036).